The primary structure comprises 223 residues: Endonuclease NucS (223 aa).

This sequence belongs to the NucS endonuclease family.

Its subcellular location is the cytoplasm. Its function is as follows. Cleaves both 3' and 5' ssDNA extremities of branched DNA structures. This Streptomyces griseus subsp. griseus (strain JCM 4626 / CBS 651.72 / NBRC 13350 / KCC S-0626 / ISP 5235) protein is Endonuclease NucS.